The primary structure comprises 301 residues: Acetylglutamate kinase (301 aa).

Substrate contacts are provided by residues 68 to 69, Arg-90, and Asn-195; that span reads GG.

It belongs to the acetylglutamate kinase family. ArgB subfamily.

Its subcellular location is the cytoplasm. It catalyses the reaction N-acetyl-L-glutamate + ATP = N-acetyl-L-glutamyl 5-phosphate + ADP. It functions in the pathway amino-acid biosynthesis; L-arginine biosynthesis; N(2)-acetyl-L-ornithine from L-glutamate: step 2/4. Catalyzes the ATP-dependent phosphorylation of N-acetyl-L-glutamate. This is Acetylglutamate kinase from Pseudomonas putida (strain W619).